A 180-amino-acid chain; its full sequence is Large ribosomal subunit protein uL5 (180 aa).

This sequence belongs to the universal ribosomal protein uL5 family. Part of the 50S ribosomal subunit; part of the 5S rRNA/L5/L18/L25 subcomplex. Contacts the 5S rRNA and the P site tRNA. Forms a bridge to the 30S subunit in the 70S ribosome.

This is one of the proteins that bind and probably mediate the attachment of the 5S RNA into the large ribosomal subunit, where it forms part of the central protuberance. In the 70S ribosome it contacts protein S13 of the 30S subunit (bridge B1b), connecting the 2 subunits; this bridge is implicated in subunit movement. Contacts the P site tRNA; the 5S rRNA and some of its associated proteins might help stabilize positioning of ribosome-bound tRNAs. In Stenotrophomonas maltophilia (strain K279a), this protein is Large ribosomal subunit protein uL5.